Consider the following 139-residue polypeptide: Probable DNA-binding protein (139 aa).

The tract at residues 97 to 139 (DEPSREASPDLGAAGAELEDESAQAGAVQGPETLRSQVLRART) is disordered.

This is Probable DNA-binding protein from Homo sapiens (Human).